The chain runs to 190 residues: NADH-dependent phenylglyoxylate dehydrogenase subunit gamma (190 aa).

Dimer of heteropentamers composed of an alpha (PadG), a beta (PadI), a gamma (PadE), a delta (PadF) and an epsilon (PadH) subunit.

It catalyses the reaction phenylglyoxylate + NAD(+) + CoA = benzoyl-CoA + CO2 + NADH. Activated by magnesium ions and thiamine diphosphate. Involved in the anaerobic metabolism of phenylalanine and phenylacetate. Catalyzes the oxidative decarboxylation of phenylglyoxylate to benzoyl-CoA and CO(2). It can also react slowly with 2-oxo-3-methylbutanoate and use different electron acceptors such as benzyl viologen, methyl viologen, FAD or FMN, but NAD seems to be the physiological electron acceptor. Also catalyzes an isotope exchange between CO(2) and the carboxyl group which proves partial or complete reversibility of the oxidative decarboxylation reaction. This Aromatoleum evansii (Azoarcus evansii) protein is NADH-dependent phenylglyoxylate dehydrogenase subunit gamma (padE).